The chain runs to 313 residues: Flagellin (313 aa).

Coiled-coil stretches lie at residues 5–33 (INTN…ERLS) and 97–117 (VQSE…KEVT). A run of 4 repeats spans residues 179–197 (KEAV…VPAD), 199–217 (KNGV…VKAQ), 255–259 (VNNLN), and 262–266 (VNNLS). Positions 179-217 (KEAVAAKPAVPAQPAVPADPKNGVAAKPAVPAQPEVKAQ) are 2 X 19 AA approximate tandem repeats. A compositionally biased stretch (low complexity) spans 190–199 (AQPAVPADPK). Residues 190–211 (AQPAVPADPKNGVAAKPAVPAQ) are disordered. Residues 252–298 (ESTVNNLNNTVNNLSAARSRIEDADYAVEVSNMSRGQILQQAGTSVL) adopt a coiled-coil conformation. A 2 X 5 AA approximate repeats of V-N-N-L-N region spans residues 255-266 (VNNLNNTVNNLS).

Belongs to the bacterial flagellin family.

Its subcellular location is the secreted. The protein localises to the bacterial flagellum. Flagellin is the subunit protein which polymerizes to form the filaments of bacterial flagella. The sequence is that of Flagellin (fliC) from Xenorhabdus nematophila (Achromobacter nematophilus).